We begin with the raw amino-acid sequence, 234 residues long: Peptidyl-tRNA hydrolase (234 aa).

Tyr-14 contacts tRNA. His-19 acts as the Proton acceptor in catalysis. Phe-64, Asn-66, and Asn-112 together coordinate tRNA. Residues 187–234 are disordered; the sequence is TGTKADEEKPKPAKSHIHQARNGVQPKKLPETGPMAEMLKKMFGPKKD.

It belongs to the PTH family. As to quaternary structure, monomer.

It is found in the cytoplasm. The enzyme catalyses an N-acyl-L-alpha-aminoacyl-tRNA + H2O = an N-acyl-L-amino acid + a tRNA + H(+). In terms of biological role, hydrolyzes ribosome-free peptidyl-tRNAs (with 1 or more amino acids incorporated), which drop off the ribosome during protein synthesis, or as a result of ribosome stalling. Functionally, catalyzes the release of premature peptidyl moieties from peptidyl-tRNA molecules trapped in stalled 50S ribosomal subunits, and thus maintains levels of free tRNAs and 50S ribosomes. The protein is Peptidyl-tRNA hydrolase of Allorhizobium ampelinum (strain ATCC BAA-846 / DSM 112012 / S4) (Agrobacterium vitis (strain S4)).